A 160-amino-acid chain; its full sequence is 6,7-dimethyl-8-ribityllumazine synthase (160 aa).

5-amino-6-(D-ribitylamino)uracil is bound by residues Trp27, Ala59–Glu61, and Val81–Ile83. Gln86–Thr87 is a binding site for (2S)-2-hydroxy-3-oxobutyl phosphate. His89 functions as the Proton donor in the catalytic mechanism. Residue Asn114 participates in 5-amino-6-(D-ribitylamino)uracil binding. A (2S)-2-hydroxy-3-oxobutyl phosphate-binding site is contributed by Arg128.

Belongs to the DMRL synthase family. As to quaternary structure, homopentamer.

It catalyses the reaction (2S)-2-hydroxy-3-oxobutyl phosphate + 5-amino-6-(D-ribitylamino)uracil = 6,7-dimethyl-8-(1-D-ribityl)lumazine + phosphate + 2 H2O + H(+). The protein operates within cofactor biosynthesis; riboflavin biosynthesis; riboflavin from 2-hydroxy-3-oxobutyl phosphate and 5-amino-6-(D-ribitylamino)uracil: step 1/2. Functionally, catalyzes the formation of 6,7-dimethyl-8-ribityllumazine by condensation of 5-amino-6-(D-ribitylamino)uracil with 3,4-dihydroxy-2-butanone 4-phosphate. This is the penultimate step in the biosynthesis of riboflavin. The polypeptide is 6,7-dimethyl-8-ribityllumazine synthase (Mycolicibacterium paratuberculosis (strain ATCC BAA-968 / K-10) (Mycobacterium paratuberculosis)).